The sequence spans 333 residues: 4-hydroxy-3-methylbut-2-enyl diphosphate reductase (333 aa).

C20 is a [4Fe-4S] cluster binding site. 2 residues coordinate (2E)-4-hydroxy-3-methylbut-2-enyl diphosphate: H49 and H85. Positions 49 and 85 each coordinate dimethylallyl diphosphate. Isopentenyl diphosphate contacts are provided by H49 and H85. C107 lines the [4Fe-4S] cluster pocket. Residue H135 coordinates (2E)-4-hydroxy-3-methylbut-2-enyl diphosphate. H135 contacts dimethylallyl diphosphate. H135 lines the isopentenyl diphosphate pocket. E137 acts as the Proton donor in catalysis. T176 lines the (2E)-4-hydroxy-3-methylbut-2-enyl diphosphate pocket. [4Fe-4S] cluster is bound at residue C206. (2E)-4-hydroxy-3-methylbut-2-enyl diphosphate-binding residues include S234, S235, N236, and S279. Positions 234, 235, 236, and 279 each coordinate dimethylallyl diphosphate. Residues S234, S235, N236, and S279 each coordinate isopentenyl diphosphate.

It belongs to the IspH family. Requires [4Fe-4S] cluster as cofactor.

The catalysed reaction is isopentenyl diphosphate + 2 oxidized [2Fe-2S]-[ferredoxin] + H2O = (2E)-4-hydroxy-3-methylbut-2-enyl diphosphate + 2 reduced [2Fe-2S]-[ferredoxin] + 2 H(+). The enzyme catalyses dimethylallyl diphosphate + 2 oxidized [2Fe-2S]-[ferredoxin] + H2O = (2E)-4-hydroxy-3-methylbut-2-enyl diphosphate + 2 reduced [2Fe-2S]-[ferredoxin] + 2 H(+). The protein operates within isoprenoid biosynthesis; dimethylallyl diphosphate biosynthesis; dimethylallyl diphosphate from (2E)-4-hydroxy-3-methylbutenyl diphosphate: step 1/1. It participates in isoprenoid biosynthesis; isopentenyl diphosphate biosynthesis via DXP pathway; isopentenyl diphosphate from 1-deoxy-D-xylulose 5-phosphate: step 6/6. Functionally, catalyzes the conversion of 1-hydroxy-2-methyl-2-(E)-butenyl 4-diphosphate (HMBPP) into a mixture of isopentenyl diphosphate (IPP) and dimethylallyl diphosphate (DMAPP). Acts in the terminal step of the DOXP/MEP pathway for isoprenoid precursor biosynthesis. This Rhizobium etli (strain CIAT 652) protein is 4-hydroxy-3-methylbut-2-enyl diphosphate reductase.